Reading from the N-terminus, the 134-residue chain is Complexin-1 (134 aa).

A disordered region spans residues Met1–Glu112. A compositionally biased stretch (basic and acidic residues) spans Asp15 to Glu81. Residues Asp29–Lys69 adopt a coiled-coil conformation. Residues Arg48 to Tyr70 are interaction with the SNARE complex.

This sequence belongs to the complexin/synaphin family. As to quaternary structure, binds to the SNARE core complex containing SNAP25, VAMP2 and STX1A.

The protein resides in the cytoplasm. It is found in the cytosol. The protein localises to the perikaryon. It localises to the presynapse. Positively regulates a late step in synaptic vesicle exocytosis. Organizes the SNAREs into a cross-linked zigzag topology that, when interposed between the vesicle and plasma membranes, is incompatible with fusion, thereby preventing SNAREs from releasing neurotransmitters until an action potential arrives at the synapse. Also involved in glucose-induced secretion of insulin by pancreatic beta-cells. The protein is Complexin-1 (CPLX1) of Bos taurus (Bovine).